Reading from the N-terminus, the 222-residue chain is PKHD-type hydroxylase Syncc9605_1577 (222 aa).

A Fe2OG dioxygenase domain is found at 80 to 175; sequence KVHSLLVSRS…RYVCVGWIES (96 aa). Positions 98, 100, and 156 each coordinate Fe cation. Arg166 serves as a coordination point for 2-oxoglutarate.

Requires Fe(2+) as cofactor. The cofactor is L-ascorbate.

The chain is PKHD-type hydroxylase Syncc9605_1577 from Synechococcus sp. (strain CC9605).